A 176-amino-acid chain; its full sequence is Cytochrome b (176 aa).

3 consecutive transmembrane segments (helical) span residues Phe-33–Met-53, Trp-77–Val-98, and Trp-113–Leu-133. Heme b is bound by residues His-83 and His-97.

Belongs to the cytochrome b family. In terms of assembly, the cytochrome bc1 complex contains 11 subunits: 3 respiratory subunits (MT-CYB, CYC1 and UQCRFS1), 2 core proteins (UQCRC1 and UQCRC2) and 6 low-molecular weight proteins (UQCRH/QCR6, UQCRB/QCR7, UQCRQ/QCR8, UQCR10/QCR9, UQCR11/QCR10 and a cleavage product of UQCRFS1). This cytochrome bc1 complex then forms a dimer. The cofactor is heme b.

It is found in the mitochondrion inner membrane. In terms of biological role, component of the ubiquinol-cytochrome c reductase complex (complex III or cytochrome b-c1 complex) that is part of the mitochondrial respiratory chain. The b-c1 complex mediates electron transfer from ubiquinol to cytochrome c. Contributes to the generation of a proton gradient across the mitochondrial membrane that is then used for ATP synthesis. This chain is Cytochrome b (MT-CYB), found in Idionycteris phyllotis (Allen's big-eared bat).